The following is a 621-amino-acid chain: uncharacterized protein (621 aa).

Phosphoserine occurs at positions 269, 271, 274, 290, and 292. LRR repeat units lie at residues 333–354 (QLLY…VFLS), 357–379 (SLVS…GELP), 380–401 (QLCS…YHIS), 404–425 (HLQI…ENVP), 426–447 (SLEK…RRLV), and 451–472 (NFEE…YRIT). Positions 552–581 (SKNASGGDTSSNVSLLNGSASEEIPQNTES) are disordered.

It is found in the cytoplasm. The protein resides in the nucleus. It localises to the vacuole membrane. This is an uncharacterized protein from Schizosaccharomyces pombe (strain 972 / ATCC 24843) (Fission yeast).